The sequence spans 233 residues: Biosynthetic peptidoglycan transglycosylase (233 aa).

The helical transmembrane segment at Ile-17–Leu-37 threads the bilayer.

It belongs to the glycosyltransferase 51 family.

The protein resides in the cell inner membrane. It carries out the reaction [GlcNAc-(1-&gt;4)-Mur2Ac(oyl-L-Ala-gamma-D-Glu-L-Lys-D-Ala-D-Ala)](n)-di-trans,octa-cis-undecaprenyl diphosphate + beta-D-GlcNAc-(1-&gt;4)-Mur2Ac(oyl-L-Ala-gamma-D-Glu-L-Lys-D-Ala-D-Ala)-di-trans,octa-cis-undecaprenyl diphosphate = [GlcNAc-(1-&gt;4)-Mur2Ac(oyl-L-Ala-gamma-D-Glu-L-Lys-D-Ala-D-Ala)](n+1)-di-trans,octa-cis-undecaprenyl diphosphate + di-trans,octa-cis-undecaprenyl diphosphate + H(+). It participates in cell wall biogenesis; peptidoglycan biosynthesis. Its function is as follows. Peptidoglycan polymerase that catalyzes glycan chain elongation from lipid-linked precursors. This chain is Biosynthetic peptidoglycan transglycosylase, found in Rhizobium etli (strain ATCC 51251 / DSM 11541 / JCM 21823 / NBRC 15573 / CFN 42).